The chain runs to 127 residues: uncharacterized protein (127 aa).

The chain crosses the membrane as a helical span at residues 84 to 103 (IALLSLFISLSIRITCFPFF).

The protein resides in the membrane. This is an uncharacterized protein from Saccharomyces cerevisiae (strain ATCC 204508 / S288c) (Baker's yeast).